Reading from the N-terminus, the 48-residue chain is uncharacterized protein (48 aa).

A helical membrane pass occupies residues 6 to 26 (IILLMIVCLVVSVLVVVWIIL).

The protein resides in the host membrane. This is an uncharacterized protein from Spiroplasma melliferum (SpV4).